The primary structure comprises 446 residues: Iroquois homeobox protein 5a (446 aa).

Residues 117–173 constitute a DNA-binding region (homeobox); the sequence is NATRDATATLKAWLNEHRKNPYPTKGEKIMLAIITKMTLTQVSTWFANARRRLKKEN. The segment at 175–312 is disordered; the sequence is MTWTPRNRSE…IHSPPSAPKP (138 aa). Positions 184 to 201 are enriched in acidic residues; the sequence is EDEEEDENIDLEKNDDDE. Basic and acidic residues-rich tracts occupy residues 202 to 220 and 227 to 258; these read PNKPTDKGDSTDTEADHKL and PCDRFKDETHSKDLDPPLTDSELKEAEERTDL. 2 stretches are compositionally biased toward polar residues: residues 264–274 and 293–303; these read KPTTSSPSVLQ and STGNSNVTSVI.

It belongs to the TALE/IRO homeobox family.

Its subcellular location is the nucleus. Functionally, transcription factor. Binds to consensus iroquois binding site (IBS) motifs 5'-ACANNTGT-3' or 5'-ACANNNTGT-3' in regulatory elements of target genes. Required, together with irx7, for hyoid joint formation; they act cell autonomously to repress expression of cartilage matrix genes, such as collagen col2a1a, within immature chondrocytes of the joint interzone. May compete with or modify Sox9a activity, thereby reducing Sox9a-mediated activation of col2a1a. Probably acts in the developing hyoid joint downstream of Bmp signaling. In concert with irx6a, plays a role in visual performance. In Danio rerio (Zebrafish), this protein is Iroquois homeobox protein 5a (irx5a).